A 435-amino-acid polypeptide reads, in one-letter code: 3-phosphoshikimate 1-carboxyvinyltransferase (435 aa).

3-phosphoshikimate is bound by residues Lys15, Ser16, and Arg20. Lys15 serves as a coordination point for phosphoenolpyruvate. 2 residues coordinate phosphoenolpyruvate: Gly96 and Arg124. 3-phosphoshikimate is bound by residues Ser169, Gln171, Ser195, Asp318, and Lys345. Gln171 provides a ligand contact to phosphoenolpyruvate. Asp318 functions as the Proton acceptor in the catalytic mechanism. Arg349 and Arg393 together coordinate phosphoenolpyruvate.

Belongs to the EPSP synthase family. In terms of assembly, monomer.

The protein resides in the cytoplasm. It carries out the reaction 3-phosphoshikimate + phosphoenolpyruvate = 5-O-(1-carboxyvinyl)-3-phosphoshikimate + phosphate. It functions in the pathway metabolic intermediate biosynthesis; chorismate biosynthesis; chorismate from D-erythrose 4-phosphate and phosphoenolpyruvate: step 6/7. Functionally, catalyzes the transfer of the enolpyruvyl moiety of phosphoenolpyruvate (PEP) to the 5-hydroxyl of shikimate-3-phosphate (S3P) to produce enolpyruvyl shikimate-3-phosphate and inorganic phosphate. This chain is 3-phosphoshikimate 1-carboxyvinyltransferase, found in Chlorobium chlorochromatii (strain CaD3).